The sequence spans 210 residues: MLQSVVFFALLTFASSVSAIYSNNTVSTTTTLAPSYSLVPQETTISYADDTTTFFVTSTVYSTSWFTSTSATITNAASSSLSTSSASGSVTPESTHEITSTSTITSTLLLTLHDSTTLSPSSTAASVSDEDSNNKDAKVKSFEQASTSNGCVPITKFVTVTNEPVTQYVTVTPNTTTQYVTVTGAPSVTTTSPGNVQWYNTTSITNSTSW.

Residues 1–19 form the signal peptide; the sequence is MLQSVVFFALLTFASSVSA. Residue N23 is glycosylated (N-linked (GlcNAc...) asparagine). Disordered regions lie at residues 80-99 and 118-142; these read SLST…HEIT and LSPS…VKSF. The span at 118-127 shows a compositional bias: low complexity; the sequence is LSPSSTAASV. Residues 132–141 are compositionally biased toward basic and acidic residues; that stretch reads SNNKDAKVKS. N-linked (GlcNAc...) asparagine glycosylation is found at N174, N200, and N206.

The protein resides in the secreted. Its subcellular location is the cell wall. It is found in the cell surface. Its function is as follows. Required to stabilize the cell wall in the absence of multiple GPI-anchored mannoproteins. This is Cell wall protein SRL1 (SRL1) from Saccharomyces cerevisiae (strain ATCC 204508 / S288c) (Baker's yeast).